The sequence spans 138 residues: Translation initiation factor 2 subunit beta (138 aa).

The protein belongs to the eIF-2-beta/eIF-5 family. Heterotrimer composed of an alpha, a beta and a gamma chain.

Its function is as follows. eIF-2 functions in the early steps of protein synthesis by forming a ternary complex with GTP and initiator tRNA. The sequence is that of Translation initiation factor 2 subunit beta from Methanococcus maripaludis (strain DSM 14266 / JCM 13030 / NBRC 101832 / S2 / LL).